Reading from the N-terminus, the 165-residue chain is SsrA-binding protein (165 aa).

The segment covering 135–158 (QAHDKRQDMARRDAQREVTRELGR) has biased composition (basic and acidic residues). Positions 135 to 165 (QAHDKRQDMARRDAQREVTRELGRRVKGMTN) are disordered.

The protein belongs to the SmpB family.

The protein resides in the cytoplasm. Required for rescue of stalled ribosomes mediated by trans-translation. Binds to transfer-messenger RNA (tmRNA), required for stable association of tmRNA with ribosomes. tmRNA and SmpB together mimic tRNA shape, replacing the anticodon stem-loop with SmpB. tmRNA is encoded by the ssrA gene; the 2 termini fold to resemble tRNA(Ala) and it encodes a 'tag peptide', a short internal open reading frame. During trans-translation Ala-aminoacylated tmRNA acts like a tRNA, entering the A-site of stalled ribosomes, displacing the stalled mRNA. The ribosome then switches to translate the ORF on the tmRNA; the nascent peptide is terminated with the 'tag peptide' encoded by the tmRNA and targeted for degradation. The ribosome is freed to recommence translation, which seems to be the essential function of trans-translation. The protein is SsrA-binding protein of Mycolicibacterium gilvum (strain PYR-GCK) (Mycobacterium gilvum (strain PYR-GCK)).